Here is a 223-residue protein sequence, read N- to C-terminus: Exosome complex component RRP46 (223 aa).

It belongs to the RNase PH family. Component of the RNA exosome complex. Specifically part of the catalytically inactive RNA exosome core complex (Exo-9) which may associate with the catalytic subunits RRP6 and DIS3 in cytoplasmic- and nuclear-specific RNA exosome complex forms. Exo-9 is formed by a hexameric base ring of RNase PH domain-containing subunits and a cap ring consisting of CSL4, RRP4 and RRP40.

It is found in the cytoplasm. The protein resides in the nucleus. Its subcellular location is the nucleolus. Functionally, non-catalytic component of the RNA exosome complex which has 3'-&gt;5' exoribonuclease activity and participates in a multitude of cellular RNA processing and degradation events. In the nucleus, the RNA exosome complex is involved in proper maturation of stable RNA species such as rRNA, snRNA and snoRNA, in the elimination of RNA processing by-products and non-coding 'pervasive' transcripts, such as antisense RNA species and cryptic unstable transcripts (CUTs), and of mRNAs with processing defects, thereby limiting or excluding their export to the cytoplasm. In the cytoplasm, the RNA exosome complex is involved in general mRNA turnover and in RNA surveillance pathways, preventing translation of aberrant mRNAs. The catalytic inactive RNA exosome core complex of 9 subunits (Exo-9) is proposed to play a pivotal role in the binding and presentation of RNA for ribonucleolysis, and to serve as a scaffold for the association with catalytic subunits and accessory proteins or complexes. RRP46 is part of the hexameric ring of RNase PH domain-containing subunits proposed to form a central channel which threads RNA substrates for degradation. The chain is Exosome complex component RRP46 (RRP46) from Saccharomyces cerevisiae (strain ATCC 204508 / S288c) (Baker's yeast).